The primary structure comprises 42 residues: Aryl-alcohol dehydrogenase (42 aa).

It belongs to the zinc-containing alcohol dehydrogenase family. In terms of assembly, homodimer. Requires Zn(2+) as cofactor.

It carries out the reaction an aromatic primary alcohol + NAD(+) = an aromatic aldehyde + NADH + H(+). In terms of biological role, oxidizes primary alcohols with an aromatic or cyclohex-1-ene ring. It is highly specific for benzyl alcohol. This is Aryl-alcohol dehydrogenase from Acinetobacter guillouiae (Acinetobacter genomosp. 11).